The following is a 448-amino-acid chain: Chromosomal replication initiator protein DnaA (448 aa).

A domain I, interacts with DnaA modulators region spans residues 1–72 (MPDLQELWNY…VEGAYEFAEI (72 aa)). A domain II region spans residues 72–110 (IELTPIFVLPGESDNLTPLEPEEEHVLTKAETPTFLRET). A domain III, AAA+ region region spans residues 111 to 327 (HLNSKYTFDT…GALVRVQAYA (217 aa)). 4 residues coordinate ATP: glycine 155, glycine 157, lysine 158, and threonine 159. The interval 328–448 (TMQNAEITTS…ILDLKNTMKS (121 aa)) is domain IV, binds dsDNA.

The protein belongs to the DnaA family. Oligomerizes as a right-handed, spiral filament on DNA at oriC.

Its subcellular location is the cytoplasm. In terms of biological role, plays an essential role in the initiation and regulation of chromosomal replication. ATP-DnaA binds to the origin of replication (oriC) to initiate formation of the DNA replication initiation complex once per cell cycle. Binds the DnaA box (a 9 base pair repeat at the origin) and separates the double-stranded (ds)DNA. Forms a right-handed helical filament on oriC DNA; dsDNA binds to the exterior of the filament while single-stranded (ss)DNA is stabiized in the filament's interior. The ATP-DnaA-oriC complex binds and stabilizes one strand of the AT-rich DNA unwinding element (DUE), permitting loading of DNA polymerase. After initiation quickly degrades to an ADP-DnaA complex that is not apt for DNA replication. Binds acidic phospholipids. The sequence is that of Chromosomal replication initiator protein DnaA from Latilactobacillus sakei subsp. sakei (strain 23K) (Lactobacillus sakei subsp. sakei).